A 390-amino-acid polypeptide reads, in one-letter code: Isoaspartyl dipeptidase (390 aa).

His-68 and His-70 together coordinate Zn(2+). Residues 75 to 77, Thr-106, and Tyr-137 contribute to the substrate site; that span reads GGE. Lys-162 provides a ligand contact to Zn(2+). Lys-162 is modified (N6-carboxylysine). Arg-169 lines the substrate pocket. Residues His-201 and His-230 each contribute to the Zn(2+) site. Arg-233 lines the substrate pocket. Asp-285 contributes to the Zn(2+) binding site. The active-site Proton acceptor is Asp-285. Ser-289 lines the substrate pocket.

It belongs to the peptidase M38 family. Zn(2+) is required as a cofactor. The cofactor is Co(2+). In terms of processing, carboxylation allows a single lysine to coordinate two zinc ions.

It localises to the cytoplasm. With respect to regulation, P-hydroxymercuribenzoate causes a slight inhibition (8 to 17 %). Iodoacetamide, o-iodosobenzoate and ammonium persulfate do not inhibit the enzyme activity. In terms of biological role, catalyzes the hydrolytic cleavage of a subset of L-isoaspartyl (L-beta-aspartyl) dipeptides. Used to degrade proteins damaged by L-isoaspartyl residues formation. The best substrate for the enzyme reported thus far is iso-Asp-Leu. The polypeptide is Isoaspartyl dipeptidase (iadA) (Escherichia coli (strain K12)).